A 185-amino-acid polypeptide reads, in one-letter code: F-box protein At1g61340 (185 aa).

Residues 78–126 form the F-box domain; that stretch reads SRELEDLPLDILVRIICGVEHEDLKQLFHVSKTIREATMIAKQSHFAYS.

The sequence is that of F-box protein At1g61340 from Arabidopsis thaliana (Mouse-ear cress).